Here is an 83-residue protein sequence, read N- to C-terminus: MSGPNGDLGTPVEAGAEGEEDGFGEAEYAAINSMLDQINSCLDHLEEKNDHLHARLQELLESNRQTRLEFQQQLGETPSDASP.

The tract at residues 1 to 25 (MSGPNGDLGTPVEAGAEGEEDGFGE) is disordered. Positions 25–74 (EAEYAAINSMLDQINSCLDHLEEKNDHLHARLQELLESNRQTRLEFQQQL) form a coiled coil. Serine 82 is modified (phosphoserine).

It belongs to the UPF0184 (EST00098) family.

It is found in the cell junction. The protein localises to the cytoplasm. Its subcellular location is the cytoskeleton. Essential for intermediate filament organization in intestinal cells, interacts with intermediate filament and regulates intestinal lumen morphology. The sequence is that of Bublin coiled-coil protein (BBLN) from Bos taurus (Bovine).